The primary structure comprises 79 residues: RNA-binding protein Hfq (79 aa).

The region spanning 10-69 (DPFLNALRKEHVPVSIYLVNGIKLQGNIESFDQYVVLLRNTVTQMVYKHAISTVVPARAV) is the Sm domain.

This sequence belongs to the Hfq family. As to quaternary structure, homohexamer.

Functionally, RNA chaperone that binds small regulatory RNA (sRNAs) and mRNAs to facilitate mRNA translational regulation in response to envelope stress, environmental stress and changes in metabolite concentrations. Also binds with high specificity to tRNAs. In Cupriavidus metallidurans (strain ATCC 43123 / DSM 2839 / NBRC 102507 / CH34) (Ralstonia metallidurans), this protein is RNA-binding protein Hfq.